Here is a 357-residue protein sequence, read N- to C-terminus: DNA polymerase IV 2 (357 aa).

The UmuC domain maps to 4-184 (IIHVDMDAFY…LAVKKFHGVG (181 aa)). Mg(2+) is bound by residues D8 and D102. E103 is an active-site residue.

This sequence belongs to the DNA polymerase type-Y family. As to quaternary structure, monomer. It depends on Mg(2+) as a cofactor.

The protein localises to the cytoplasm. It catalyses the reaction DNA(n) + a 2'-deoxyribonucleoside 5'-triphosphate = DNA(n+1) + diphosphate. Poorly processive, error-prone DNA polymerase involved in untargeted mutagenesis. Copies undamaged DNA at stalled replication forks, which arise in vivo from mismatched or misaligned primer ends. These misaligned primers can be extended by PolIV. Exhibits no 3'-5' exonuclease (proofreading) activity. May be involved in translesional synthesis, in conjunction with the beta clamp from PolIII. The sequence is that of DNA polymerase IV 2 (dinB2) from Agrobacterium fabrum (strain C58 / ATCC 33970) (Agrobacterium tumefaciens (strain C58)).